Reading from the N-terminus, the 536-residue chain is MKFFTTGLLATAALAAAQEQQVLQAEDGMGRAPLPDSSIFDETLQKFQSSLEDGISHFWSEMKTNFKDYLPLISLPKKHTRRPDSEWDHVVRGADIESVWVQGADGEKRREIDGKLHNYDLRVKAVDPGVKQYSGYLDDNDADKHLFYWFFESRNDPKNDPVVLWLNGGPGCSSLTGLFLELGPATIDKNLKVVSNPYSWNSNASVIFLDQPVNVGFSYSGSSVSDTVAAGKDVYALLTLFFKQFPEYATQDFHISGESYAGHYIPVFAAEILSHKNTNINLKSALIGNGLTDPLTQYPQYRPMACGEGGYPAVLDQGTCRSMDNSLERCLSLIETCYSSESAWVCVPAAMYCNSAILAPYQQTGMNPYDVRTKCEDMASLCYPQLNAITEWLNQKPVMQALGVEVESYESCNSGINRDFLFHGDWMKPYHRLVPSVLEKIPVLIYAGDADFICNWLGNKAWTEALEWPGHKKFAETKLEDLKIVDNKNKGKKIGQVKSSGNFTFMRIFGAGHMVPLNQPEASLEFLNRWLRGEWH.

The N-terminal stretch at 1-17 is a signal peptide; that stretch reads MKFFTTGLLATAALAAA. The propeptide occupies 18–124; sequence QEQQVLQAED…KLHNYDLRVK (107 aa). 5 disulfides stabilise this stretch: cysteine 172/cysteine 412, cysteine 306/cysteine 320, cysteine 330/cysteine 353, cysteine 337/cysteine 346, and cysteine 375/cysteine 382. Residue asparagine 203 is glycosylated (N-linked (GlcNAc...) asparagine). The active site involves serine 259. Residue aspartate 451 is part of the active site. An N-linked (GlcNAc...) asparagine glycan is attached at asparagine 502. Histidine 513 is a catalytic residue.

Belongs to the peptidase S10 family.

It is found in the vacuole. It catalyses the reaction Release of a C-terminal amino acid with broad specificity.. In terms of biological role, vacuolar carboxypeptidase involved in degradation of small peptides. Digests preferentially peptides containing an aliphatic or hydrophobic residue in P1' position, as well as methionine, leucine or phenylalanine in P1 position of ester substrate. The sequence is that of Carboxypeptidase Y homolog A (cpyA) from Trichophyton rubrum (Athlete's foot fungus).